The chain runs to 311 residues: Taste receptor type 2 member 40 (311 aa).

Over 1–9 the chain is Extracellular; the sequence is MSSLFSSFC. The chain crosses the membrane as a helical span at residues 10-30; it reads LVIAIFESVVGLLGNGTIVAV. The Cytoplasmic portion of the chain corresponds to 31–55; that stretch reads SSTSCIRSKILSSYDVIVIFLSLSR. A helical membrane pass occupies residues 56–76; the sequence is FFLQLWMILDFLLIFFCQPSY. Over 77-87 the chain is Extracellular; that stretch reads YEENLFVTFKT. Residues 88–108 traverse the membrane as a helical segment; sequence VFIFLNSYSFWFAAWLSVFYC. Over 109–128 the chain is Cytoplasmic; sequence VKVASFTQSFLSWLKQRIAS. The helical transmembrane segment at 129-149 threads the bilayer; it reads LIPWMLITSSLFSFATSLPFF. Topologically, residues 150-178 are extracellular; sequence WDSYNAHSNFTTPLTMTNSSKRITTRKTN. Residues 179-199 form a helical membrane-spanning segment; that stretch reads LIFLILLCNVGIALPSIMLVF. The Cytoplasmic portion of the chain corresponds to 200-235; the sequence is SSILLIRSLWRHTRQMQNNATGFRDPSLEALIGAIK. The chain crosses the membrane as a helical span at residues 236–256; sequence TVFSFLLLYITNFIALILILS. Residues 257-266 lie on the Extracellular side of the membrane; it reads DTFVPLSTEE. The helical transmembrane segment at 267–287 threads the bilayer; sequence AICVVVVAACPAGQSMVLIWS. Residues 288 to 311 are Cytoplasmic-facing; that stretch reads NPRFRELLSSILHYVNSCVRARCS.

Belongs to the G-protein coupled receptor T2R family. As to expression, expressed in the oral cavity, as well as in the gastrointestinal tract, including in the upper palate, tongue, proventriculus, ventriculus, duodenum, jejunum, ileum, cecum and colon.

It localises to the cell membrane. Its function is as follows. Bitter taste receptor. Binds quinine, dextromethorphan, diphenhydramine, diphenidol, chlorpheniramine, diphenidol, chloramphenicol, chloroquine and coumarin, this latter being a weak agonist, as well as epiquinidine, ethylhydrocupreine and quinidine. The polypeptide is Taste receptor type 2 member 40 (TAS2R40) (Gallus gallus (Chicken)).